Reading from the N-terminus, the 131-residue chain is Phosphoribosyl-ATP pyrophosphatase 2 (131 aa).

The segment at 105–131 (RIGKPAAPHATRRPVIPQEARAVRKHR) is disordered.

Belongs to the PRA-PH family.

Its subcellular location is the cytoplasm. It carries out the reaction 1-(5-phospho-beta-D-ribosyl)-ATP + H2O = 1-(5-phospho-beta-D-ribosyl)-5'-AMP + diphosphate + H(+). The protein operates within amino-acid biosynthesis; L-histidine biosynthesis; L-histidine from 5-phospho-alpha-D-ribose 1-diphosphate: step 2/9. The protein is Phosphoribosyl-ATP pyrophosphatase 2 (hisE2) of Rhodopseudomonas palustris (strain ATCC BAA-98 / CGA009).